We begin with the raw amino-acid sequence, 374 residues long: Type IV pilus assembly protein PilC (374 aa).

A run of 3 helical transmembrane segments spans residues 138–158 (AMTYPIAVIIVALIVSAILLI), 187–207 (EFLQEWWLAVIVGVGAIGFTF), and 347–367 (IMAVLGVLVGGLIVAMYLPIF).

It belongs to the GSP F family. Homotetramer. Interacts with PilB.

Its subcellular location is the cell inner membrane. Functionally, essential inner membrane component of the type IV pilus (T4P) that plays a role in surface and host cell adhesion, colonization, biofilm maturation, virulence, and twitching, a form of surface-associated motility facilitated by cycles of extension, adhesion, and retraction of T4P fibers. Controls both pilus assembly and disassembly and plays an important role in PilB localization to the complex and ATPase activity. The polypeptide is Type IV pilus assembly protein PilC (pilC) (Pseudomonas aeruginosa (strain ATCC 15692 / DSM 22644 / CIP 104116 / JCM 14847 / LMG 12228 / 1C / PRS 101 / PAO1)).